A 496-amino-acid chain; its full sequence is MHAKSLTELRAALAAKECSAVELAQLYLKRIDAARDLNAFVHVDADLTLAQAKAADAELARGAGGALTGLPIAHKDVFVTRGWRSTAGSKMLANYESPFDATVVARLQAAGMVTLGKTNMDEFAMGSSNENSAFGAVKNPWDTNAVPGGSSGGSSAAVAARLAPAATGTDTGGSIRQPASFAGVTGIKPTYGRVSRYGMIAFASSLDQGGPMAQSASDCALLLNAMSGFDERDSTSLEREDEDFTRHLGQPWAAGNDAGKPLAGLRIGLPNEYFGDGLADDVRASIDAALKAYEALGATLVPVSLPKTELSIPVYYVIAPAEASSNLSRFDGVRFGHRAAQYGDLLDMYKKSRAEGFGPEVKRRILVGAYVLSHGYYDAYYLQAQKIRRIIAQDFQEAFKSCDVIMGPASPTVAWDLGAKGDDPVQMYLADIYTLSVSLAGLPGMSVPCGFGAGANAKRPVGLQIIGNYFNEARMLQVADAFQRATDWHKQVPAGV.

Active-site charge relay system residues include lysine 75 and serine 150. The Acyl-ester intermediate role is filled by serine 174.

It belongs to the amidase family. GatA subfamily. Heterotrimer of A, B and C subunits.

It catalyses the reaction L-glutamyl-tRNA(Gln) + L-glutamine + ATP + H2O = L-glutaminyl-tRNA(Gln) + L-glutamate + ADP + phosphate + H(+). Functionally, allows the formation of correctly charged Gln-tRNA(Gln) through the transamidation of misacylated Glu-tRNA(Gln) in organisms which lack glutaminyl-tRNA synthetase. The reaction takes place in the presence of glutamine and ATP through an activated gamma-phospho-Glu-tRNA(Gln). In Burkholderia ambifaria (strain MC40-6), this protein is Glutamyl-tRNA(Gln) amidotransferase subunit A.